A 385-amino-acid polypeptide reads, in one-letter code: Glucans biosynthesis protein C (385 aa).

10 helical membrane-spanning segments follow: residues 17-37 (AWLMLLGIPFHISLIYSSHTW), 60-80 (MQVFFVISGYFSYMLFLRYPL), 91-111 (VGIPMLTAIPLLTLPQFIMLQ), 137-157 (ISHLWFLLVLVVMTTLCVWIF), 173-193 (KFSMVKLSVIFLCLGIGYAVI), 212-232 (FIVMQTLFYLPFFILGALAFI), 239-259 (LFTTPSRGCTLAAALAFVAYL), 274-294 (TESVITMVLGLWMVNVVFSFG), 311-331 (ASLFIYLVHHPLTLFFGAYIT), and 338-358 (WLGFLCGLIFVVGIAIILYEI).

Belongs to the acyltransferase 3 family. OpgC subfamily.

The protein resides in the cell membrane. The protein operates within glycan metabolism; osmoregulated periplasmic glucan (OPG) biosynthesis. Its function is as follows. Necessary for the succinyl substitution of periplasmic glucans. Could catalyze the transfer of succinyl residues from the cytoplasmic side of the membrane to the nascent glucan backbones on the periplasmic side of the membrane. This chain is Glucans biosynthesis protein C, found in Escherichia coli O6:K15:H31 (strain 536 / UPEC).